The primary structure comprises 142 residues: Hemoglobin subunit alpha-1 (142 aa).

Ser-1 is modified (N-acetylserine). The region spanning 1 to 142 (SLSDKDKAAV…VALALAERYR (142 aa)) is the Globin domain. An O2-binding site is contributed by His-59. His-88 serves as a coordination point for heme b.

It belongs to the globin family. In terms of assembly, hb1 is a heterotetramer of two alpha-2 chains and two beta chains, while Hb2 is a heterotetramer of two alpha-2 chains and two beta chains. In terms of tissue distribution, red blood cells.

In terms of biological role, involved in oxygen transport from gills to the various peripheral tissues. In Notothenia angustata (Rockcod), this protein is Hemoglobin subunit alpha-1 (hba1).